The sequence spans 524 residues: Zinc finger CCCH-type with G patch domain-containing protein (524 aa).

The tract at residues 105-142 (SEESQPLGSNDETSTCSKGSEEEEEEEEEEEDNTSGMK) is disordered. Residues 106–122 (EESQPLGSNDETSTCSK) are compositionally biased toward polar residues. Residues 125-137 (EEEEEEEEEEEDN) show a composition bias toward acidic residues. The segment at 184-210 (KAMKPCPFFLDGKCLFNDNCRFSHGQV) adopts a C3H1-type zinc-finger fold. Residues 279 to 298 (RGSDSSSSSSSDEEEDGAAE) are disordered. The G-patch domain occupies 326-372 (TRGIGSKLLVRMGYEFGKGLGRNAEGRVEPIQAVVLPKGKSLDQCME). Disordered stretches follow at residues 375 to 402 (QRKKAGGKHKHKTSKRRPKASGQGGGAK) and 500 to 524 (GLQQEERSLQREQKKADTHKKMTEF). The segment covering 376-393 (RKKAGGKHKHKTSKRRPK) has biased composition (basic residues).

It localises to the nucleus. Its function is as follows. Transcription repressor that specifically binds the 5'-GGAG[GA]A[GA]A-3' consensus sequence. Represses transcription by recruiting the chromatin multiprotein complex NuRD to target promoters. Negatively regulates expression of EGFR, a gene involved in cell proliferation, survival and migration. The polypeptide is Zinc finger CCCH-type with G patch domain-containing protein (zgpat) (Xenopus laevis (African clawed frog)).